A 715-amino-acid chain; its full sequence is Metastasis-associated protein MTA1 (715 aa).

Positions M1–K164 constitute a BAH domain. The ELM2 domain occupies G165–G276. Residue K182 forms a Glycyl lysine isopeptide (Lys-Gly) (interchain with G-Cter in ubiquitin) linkage. The region spanning D283–R335 is the SANT domain. A Phosphoserine modification is found at S386. The segment at C393–C420 adopts a GATA-type; atypical zinc-finger fold. A disordered region spans residues D437–S460. Residue S449 is modified to Phosphoserine. Residue K509 forms a Glycyl lysine isopeptide (Lys-Gly) (interchain with G-Cter in SUMO2 and SUMO3) linkage. S522 carries the post-translational modification Phosphoserine. A compositionally biased stretch (basic and acidic residues) spans E542–P552. The tract at residues E542–G590 is disordered. Positions P545–P552 match the SH3-binding motif. K549 is covalently cross-linked (Glycyl lysine isopeptide (Lys-Gly) (interchain with G-Cter in SUMO2)). Low complexity predominate over residues V553–P565. The residue at position 564 (T564) is a Phosphothreonine. Residue S576 is modified to Phosphoserine. T578 is modified (phosphothreonine). Residue K626 is modified to N6-acetyllysine; alternate. K626 is covalently cross-linked (Glycyl lysine isopeptide (Lys-Gly) (interchain with G-Cter in ubiquitin); alternate). A Phosphoserine modification is found at S639. The segment at D656–K686 is interaction with RBBP4. The tract at residues S673–D715 is disordered. The SH3-binding motif lies at L696–P705. The short motif at I711–D715 is the SUMO interaction motif 1 (SIM); crucial for efficient sumoylation element.

This sequence belongs to the metastasis-associated protein family. Component of the nucleosome remodeling and deacetylase (NuRD) repressor complex, composed of core proteins MTA1, MTA2, MTA3, RBBP4, RBBP7, HDAC1, HDAC2, MBD2, MBD3, and peripherally associated proteins CDK2AP1, CDK2AP2, GATAD2A, GATAD2B, CHD3, CHD4 and CHD5. The exact stoichiometry of the NuRD complex is unknown, and some subunits such as MBD2 and MBD3, GATAD2A and GATAD2B, and CHD3, CHD4 and CHD5 define mutually exclusive NuRD complexes. Interacts with RBBP4; the interaction is direct. Interacts with BMAL1. Interacts with CLOCK. Interacts with COP1. Interacts with CSNK1G2 in the cytoplasm. Interacts with EP300. Interacts with HDAC2. Interacts with ITGB3BP/CENPR. Interacts with MBD3L2. Interacts with MDM2. Interacts with NACC2. Interacts with p53/TP53. Interacts with PIAS1. Interacts with PIAS3. Interacts with PIAS4. Interacts with PWWP2A. Interacts with PWWP2B. Interacts with SENP1. Interacts with SENP2. Interacts with SIX3; facilitates the binding of SIX3 to the core DNA motif of SIX3 promoter. Interacts with SUMO1. Interacts with SUMO2. Interacts with TFCP2L1; which is indispensable for TFCP2L1-mediated self-renewal-promoting effect and endoderm-inhibiting action. Interacts with TFAP2C. Interacts with TPR. Interacts with UBE2I/UBC9. Post-translationally, phosphorylation by CSNK1G2/CK1 triggered by estrogen enhances corepression of estrogen receptor (ER). Acetylation is essential for its transcriptional coactivator activity. In terms of processing, sumoylation positively regulates its transcriptional corepressor activity but does not affect the protein stability. Sumoylated preferentially by SUMO2 or SUMO3 than SUMO1. Sumoylation is enhanced by PIAS1/3/4 and preferentially sumoylated by SUMO2 in the presence of PIAS1/3/4. Desumoylated by SENP1. Post-translationally, ubiquitinated by COP1, which leads to proteasomal degradation. Widely expressed but not in skeletal muscle. Highly expressed in the brain, liver, kidney and cardiac muscle and in mammary tumors.

The protein localises to the nucleus. It localises to the nucleus envelope. The protein resides in the cytoplasm. It is found in the cytoskeleton. Its function is as follows. Transcriptional coregulator which can act as both a transcriptional corepressor and coactivator. Acts as a component of the histone deacetylase NuRD complex which participates in the remodeling of chromatin. In the NuRD complex, regulates transcription of its targets by modifying the acetylation status of the target chromatin and cofactor accessibility to the target DNA. In conjunction with other components of NuRD, acts as a transcriptional corepressor of BRCA1, ESR1, TFF1 and CDKN1A. Acts as a transcriptional coactivator of BCAS3, PAX5 and SUMO2, independent of the NuRD complex. Stimulates the expression of WNT1 by inhibiting the expression of its transcriptional corepressor SIX3. Regulates p53-dependent and -independent DNA repair processes following genotoxic stress. Regulates the stability and function of p53/TP53 by inhibiting its ubiquitination by COP1 and MDM2 thereby regulating the p53-dependent DNA repair. Plays a role in the regulation of the circadian clock and is essential for the generation and maintenance of circadian rhythms under constant light and for normal entrainment of behavior to light-dark (LD) cycles. Positively regulates the CLOCK-BMAL1 heterodimer mediated transcriptional activation of its own transcription and the transcription of CRY1. Regulates deacetylation of BMAL1 by regulating SIRT1 expression, resulting in derepressing CRY1-mediated transcription repression. With Tfcp2l1, promotes establishment and maintenance of pluripotency in embryonic stem cells (ESCs) and inhibits endoderm differentiation. This Mus musculus (Mouse) protein is Metastasis-associated protein MTA1 (Mta1).